Here is a 116-residue protein sequence, read N- to C-terminus: Ribosome-binding factor A (116 aa).

The protein belongs to the RbfA family. In terms of assembly, monomer. Binds 30S ribosomal subunits, but not 50S ribosomal subunits or 70S ribosomes.

It is found in the cytoplasm. Its function is as follows. One of several proteins that assist in the late maturation steps of the functional core of the 30S ribosomal subunit. Associates with free 30S ribosomal subunits (but not with 30S subunits that are part of 70S ribosomes or polysomes). Required for efficient processing of 16S rRNA. May interact with the 5'-terminal helix region of 16S rRNA. The polypeptide is Ribosome-binding factor A (Chlorobium phaeobacteroides (strain BS1)).